Here is an 824-residue protein sequence, read N- to C-terminus: DNA replication helicase (824 aa).

90-97 (GTAGAGKT) lines the ATP pocket.

This sequence belongs to the herpesviridae helicase family. Associates with the primase and the primase-associated factor to form the helicase-primase complex.

It localises to the host nucleus. Functionally, component of the helicase/primase complex. Unwinds the DNA at the replication forks and generates single-stranded DNA for both leading and lagging strand synthesis. The primase synthesizes short RNA primers on the lagging strand that the polymerase elongates using dNTPs. Possesses helicase-like motifs and therefore may act as the helicase subunit of the complex. The chain is DNA replication helicase from Human herpesvirus 6B (strain Z29) (HHV-6 variant B).